The chain runs to 263 residues: Copper homeostasis protein cutC homolog (263 aa).

It belongs to the CutC family.

Its function is as follows. Involved in copper homeostasis. This chain is Copper homeostasis protein cutC homolog, found in Drosophila melanogaster (Fruit fly).